The sequence spans 368 residues: GDSL esterase/lipase At4g16230 (368 aa).

The N-terminal stretch at 1–24 (MSLLVFLCQIIVLSVLFFSEVCLA) is a signal peptide. Catalysis depends on serine 37, which acts as the Nucleophile. Asparagine 117 and asparagine 286 each carry an N-linked (GlcNAc...) asparagine glycan. Active-site residues include aspartate 329 and histidine 332.

The protein belongs to the 'GDSL' lipolytic enzyme family.

The protein resides in the secreted. In Arabidopsis thaliana (Mouse-ear cress), this protein is GDSL esterase/lipase At4g16230.